The primary structure comprises 180 residues: UPF0690 protein C1orf52 homolog (180 aa).

Disordered regions lie at residues 1-66 (MAAE…SVTR) and 96-180 (KIWK…KKKK). A compositionally biased stretch (basic and acidic residues) spans 48–61 (KQAEKRLPGPDELF). Threonine 65 carries the phosphothreonine modification. At tyrosine 130 the chain carries Phosphotyrosine. A compositionally biased stretch (acidic residues) spans 149–160 (EGEETVESDDDK). The residue at position 156 (serine 156) is a Phosphoserine. Residues 161 to 180 (DERASKIRRVEPGEAAKKKK) are compositionally biased toward basic and acidic residues.

It belongs to the UPF0690 family.

The sequence is that of UPF0690 protein C1orf52 homolog from Mus musculus (Mouse).